A 201-amino-acid polypeptide reads, in one-letter code: NADH-quinone oxidoreductase subunit C (201 aa).

It belongs to the complex I 30 kDa subunit family. As to quaternary structure, NDH-1 is composed of 14 different subunits. Subunits NuoB, C, D, E, F, and G constitute the peripheral sector of the complex.

Its subcellular location is the cell inner membrane. The catalysed reaction is a quinone + NADH + 5 H(+)(in) = a quinol + NAD(+) + 4 H(+)(out). Its function is as follows. NDH-1 shuttles electrons from NADH, via FMN and iron-sulfur (Fe-S) centers, to quinones in the respiratory chain. The immediate electron acceptor for the enzyme in this species is believed to be ubiquinone. Couples the redox reaction to proton translocation (for every two electrons transferred, four hydrogen ions are translocated across the cytoplasmic membrane), and thus conserves the redox energy in a proton gradient. The chain is NADH-quinone oxidoreductase subunit C from Dechloromonas aromatica (strain RCB).